A 995-amino-acid chain; its full sequence is Bifunctional glutamine synthetase adenylyltransferase/adenylyl-removing enzyme (995 aa).

The tract at residues methionine 1–leucine 487 is adenylyl removase. The interval alanine 492–serine 995 is adenylyl transferase.

This sequence belongs to the GlnE family. Mg(2+) serves as cofactor.

The catalysed reaction is [glutamine synthetase]-O(4)-(5'-adenylyl)-L-tyrosine + phosphate = [glutamine synthetase]-L-tyrosine + ADP. The enzyme catalyses [glutamine synthetase]-L-tyrosine + ATP = [glutamine synthetase]-O(4)-(5'-adenylyl)-L-tyrosine + diphosphate. Its function is as follows. Involved in the regulation of glutamine synthetase GlnA, a key enzyme in the process to assimilate ammonia. When cellular nitrogen levels are high, the C-terminal adenylyl transferase (AT) inactivates GlnA by covalent transfer of an adenylyl group from ATP to specific tyrosine residue of GlnA, thus reducing its activity. Conversely, when nitrogen levels are low, the N-terminal adenylyl removase (AR) activates GlnA by removing the adenylyl group by phosphorolysis, increasing its activity. The regulatory region of GlnE binds the signal transduction protein PII (GlnB) which indicates the nitrogen status of the cell. The protein is Bifunctional glutamine synthetase adenylyltransferase/adenylyl-removing enzyme of Mycobacterium marinum (strain ATCC BAA-535 / M).